A 99-amino-acid chain; its full sequence is Putative septation protein SpoVG (99 aa).

It belongs to the SpoVG family.

In terms of biological role, could be involved in septation. The polypeptide is Putative septation protein SpoVG (Exiguobacterium sp. (strain ATCC BAA-1283 / AT1b)).